Here is a 60-residue protein sequence, read N- to C-terminus: Large ribosomal subunit protein bL32 (60 aa).

The interval 1–44 is disordered; the sequence is MAVQQNKKSRSARDMRRSHDALEASTLSVEKTTGEVHLRHHVSP. Residues 11-22 show a composition bias toward basic and acidic residues; the sequence is SARDMRRSHDAL.

This sequence belongs to the bacterial ribosomal protein bL32 family.

In Pseudomonas fluorescens (strain SBW25), this protein is Large ribosomal subunit protein bL32.